The primary structure comprises 587 residues: Estrogen receptor (587 aa).

Residues 1–176 form a modulating (transactivation AF-1) region; that stretch reads MTLHTKTSGV…SMESTKETRY (176 aa). 2 NR C4-type zinc fingers span residues 177–197 and 213–237; these read CAVCNDYASGYHYGVWSCEGC and CPATNQCTIDKNRRKSCQACRLRKC. Residues 177–242 constitute a DNA-binding region (nuclear receptor); that stretch reads CAVCNDYASG…RLRKCYEVGM (66 aa). Residues 243–302 form a hinge region; sequence MKGGIRKDRRGGRVMKQKRQREEQDSRNGEASSTELRAPTLWASPLVVKHNKKNSPALSL. Residues 248-277 are disordered; it reads RKDRRGGRVMKQKRQREEQDSRNGEASSTE. Residues 249-261 are compositionally biased toward basic residues; sequence KDRRGGRVMKQKR. Residues 303–539 enclose the NR LBD domain; that stretch reads TAEQMVSALL…DLLLEMLDAH (237 aa). The transactivation AF-2 stretch occupies residues 303–587; sequence TAEQMVSALL…KEEENMQNTL (285 aa).

Belongs to the nuclear hormone receptor family. NR3 subfamily. Binds DNA as a homodimer. Can form a heterodimer with ER-beta.

Its subcellular location is the nucleus. In terms of biological role, the steroid hormones and their receptors are involved in the regulation of eukaryotic gene expression and affect cellular proliferation and differentiation in target tissues. The chain is Estrogen receptor (ESR1) from Taeniopygia guttata (Zebra finch).